The sequence spans 793 residues: uncharacterized protein (793 aa).

A signal peptide spans 1–22 (MKFKYGAIFFSGFLGLSAILAA). A lipid anchor (N-palmitoyl cysteine) is attached at cysteine 23. Cysteine 23 is lipidated: S-diacylglycerol cysteine. 3 disordered regions span residues 181–200 (LNQK…TLTV), 212–264 (KIED…DDQV), and 444–504 (KAPS…SNNN). A compositionally biased stretch (basic and acidic residues) spans 212–227 (KIEDSAKANGKSDEKG). Residues 237-246 (ATFSLVQLKQ) show a composition bias toward polar residues. Over residues 247-264 (TQEKTDDSQDTKNSDDQV) the composition is skewed to basic and acidic residues. The segment covering 449–468 (NGENGQTNEGNSTNGEQNLL) has biased composition (polar residues). A compositionally biased stretch (basic and acidic residues) spans 472–485 (EVKDDSKPKEEVKS). The segment covering 491–504 (KESSQNQGKKSNNN) has biased composition (low complexity).

This sequence belongs to the MG185/MG260 family.

It is found in the cell membrane. This is an uncharacterized protein from Mycoplasma pneumoniae (strain ATCC 29342 / M129 / Subtype 1) (Mycoplasmoides pneumoniae).